Here is a 515-residue protein sequence, read N- to C-terminus: 2-isopropylmalate synthase (515 aa).

Residues 5 to 267 (VIIFDTTLRD…DTRINTQEIH (263 aa)) enclose the Pyruvate carboxyltransferase domain. Mn(2+) contacts are provided by aspartate 14, histidine 202, histidine 204, and asparagine 238. Positions 392-515 (VLDKLSAHST…VADIKSHKHH (124 aa)) are regulatory domain.

The protein belongs to the alpha-IPM synthase/homocitrate synthase family. LeuA type 1 subfamily. Homodimer. The cofactor is Mn(2+).

The protein resides in the cytoplasm. It carries out the reaction 3-methyl-2-oxobutanoate + acetyl-CoA + H2O = (2S)-2-isopropylmalate + CoA + H(+). It functions in the pathway amino-acid biosynthesis; L-leucine biosynthesis; L-leucine from 3-methyl-2-oxobutanoate: step 1/4. Catalyzes the condensation of the acetyl group of acetyl-CoA with 3-methyl-2-oxobutanoate (2-ketoisovalerate) to form 3-carboxy-3-hydroxy-4-methylpentanoate (2-isopropylmalate). This Haemophilus influenzae (strain 86-028NP) protein is 2-isopropylmalate synthase.